The sequence spans 463 residues: Ribosomal protein uS12 methylthiotransferase RimO (463 aa).

Residues 15–130 (PKVGMVSLGC…VMQAVHSHLP (116 aa)) enclose the MTTase N-terminal domain. Residues C24, C60, C89, C161, C165, and C168 each contribute to the [4Fe-4S] cluster site. Residues 147–392 (LTPRHYAYLK…MEVAEEVSAA (246 aa)) form the Radical SAM core domain. The 69-residue stretch at 395–463 (ARKIGKTLKV…ADGHDLWGEV (69 aa)) folds into the TRAM domain.

The protein belongs to the methylthiotransferase family. RimO subfamily. Requires [4Fe-4S] cluster as cofactor.

It is found in the cytoplasm. It carries out the reaction L-aspartate(89)-[ribosomal protein uS12]-hydrogen + (sulfur carrier)-SH + AH2 + 2 S-adenosyl-L-methionine = 3-methylsulfanyl-L-aspartate(89)-[ribosomal protein uS12]-hydrogen + (sulfur carrier)-H + 5'-deoxyadenosine + L-methionine + A + S-adenosyl-L-homocysteine + 2 H(+). Its function is as follows. Catalyzes the methylthiolation of an aspartic acid residue of ribosomal protein uS12. This is Ribosomal protein uS12 methylthiotransferase RimO from Burkholderia mallei (strain NCTC 10229).